The sequence spans 452 residues: Prenyltransferase fsdK (452 aa).

This sequence belongs to the tryptophan dimethylallyltransferase family.

It functions in the pathway mycotoxin biosynthesis. In terms of biological role, prenyltransferase; part of the gene cluster that mediates the biosynthesis of fusaridione A, a bright yellow trans-fused decalin-containing tetramic acid with antimicrobial activity. The PKS module of fsdS catalyzes the formation of the polyketide unit which is then conjugated to L-tyrosine by the condensation domain of the fsdS NRPS module. Activity of the Dieckmann cyclase domain (RED) results in release of the intermediate fusaridione A. The unstable pyrrolidinedione ring of fusaridione A is opened through a reverse-Dieckmann reaction to afford its ring-opened form. This Fusarium heterosporum protein is Prenyltransferase fsdK.